The sequence spans 611 residues: MALRYLNKFSLLSLAVPTLAAPIGSSFGVPGTDALYDYVVVGAGNAGAPVAYRLAETGHTVALVEAGSLYEYGNGNLSQIPANSLFFIGKDPEWTNNLVDWNFVTSPQAEWNNASVHYASGKVLGGSTGRNLMTYHLPTKGSLDRWAEDVSDESWNFDNMLPYIMKSQRFTPPNNNLRFRNATPTYDPAVLGRRGRLDVTYPNYANGLASWLVRGFRDIGLAAIRGLNGGQLIGSAYTLSTIQPGNQHRASSKTAYLDPLIGRNLNLIIYQSTHAKRILFSNDTVATGVRVSSEGQEYTLSARNEVIVSAGAFKTPQLLMVSGIGPAANLERYGIPLVADRPGVGQNLQDHTLAGPSYRVNAITGSSNSIPEFITEAQRQYNSNPPRGVLTNTGVDILGWEKVPEQLRGNFSTETEDALASLPEDWPELEYLPVYGYFGDQNNYMVTPNDGFNYLTIAAAVVSPLSRGTVDIASNDTEVNPIIDPRWFAHPGDIQVAVAGFRRSRALMASPAMAGITLGGESYPGTDVQTDDEIVEWLREASNTVHHACCTAGMGPRDNPDSVVDTQGRVIGVSGLRIVDASIMPFLPPGHPISIIYGLAERIAESILADA.

An N-terminal signal peptide occupies residues 1–20 (MALRYLNKFSLLSLAVPTLA). FAD contacts are provided by residues 45–46 (NA) and 65–66 (EA). 2 N-linked (GlcNAc...) asparagine glycosylation sites follow: Asn76 and Asn113. Residues Val123 and 131–134 (NLMT) each bind FAD. Residues Asn282, Asn410, and Asn475 are each glycosylated (N-linked (GlcNAc...) asparagine). His547 functions as the Proton acceptor in the catalytic mechanism. His547 serves as the catalytic Proton donor. Position 581 (Ala581) interacts with FAD. Catalysis depends on His591, which acts as the Proton acceptor. 592–593 (PI) is an FAD binding site.

It belongs to the GMC oxidoreductase family. Requires FAD as cofactor.

The protein operates within phytotoxin biosynthesis. Functionally, oxidoreductase; part of the gene cluster that mediates the biosynthesis of cichorine, a phytotoxin active against knapweed, corn, and soybeans. The first step in the pathway is performed by the non-reducing polyketide synthase pkbA that condenses one acetyl-CoA starter unit with 3 malonyl-CoA units. PkbA also catalyzes one methylation step to produce 3-methylorsellinate. The nonribosomal peptide synthase-like protein cicB, the cytochrome P450 monooxygenase cicH and the O-methyltransferase cicE are involved in the conversion of 3-methylorsellinate into nidulol. CicB converts 3-methylorsellinate to a yet unidentified intermediate, cicH may play a ring-closing role for cichorine and cicE is plausibly responsible for the methylation of one of the phenol groups. The oxidoreductase cicC acts downstream with still unidentified enzymes to further convert nidulol into cichorine. In Emericella nidulans (strain FGSC A4 / ATCC 38163 / CBS 112.46 / NRRL 194 / M139) (Aspergillus nidulans), this protein is Oxidoreductase cicC.